Reading from the N-terminus, the 317-residue chain is Apolipoprotein E (317 aa).

The N-terminal stretch at 1 to 18 (MKVLWAALLVTFLAGCQA) is a signal peptide. 8 tandem repeats follow at residues 80-101 (TLMD…EQLS), 102-123 (PVAE…ARLG), 124-145 (ADME…AMLG), 146-167 (QSTE…KRLL), 168-189 (RDAD…EGAE), 190-211 (RGVS…VRAA), 212-233 (TVGS…ERLR), and 234-255 (ARME…EQVA). Positions 80 to 255 (TLMDETMKEL…RLDEVKEQVA (176 aa)) are 8 X 22 AA approximate tandem repeats. Met143 bears the Methionine sulfoxide mark. Ser147 carries the post-translational modification Phosphoserine. Residues 158 to 168 (HLRKLRKRLLR) are LDL and other lipoprotein receptors binding. 162-165 (LRKR) contributes to the heparin binding site. A lipid-binding and lipoprotein association region spans residues 210-290 (AATVGSLASQ…SWFEPLVEDM (81 aa)). Thr212 carries an O-linked (GalNAc...) threonine glycan. 229 to 236 (GERLRARM) is a binding site for heparin. The homooligomerization stretch occupies residues 266–317 (QQISLQAEAFQARLKSWFEPLVEDMQRQWAGLVEKVQAAVGASTAPVPSDNH). The tract at residues 278-290 (RLKSWFEPLVEDM) is specificity for association with VLDL.

The protein belongs to the apolipoprotein A1/A4/E family. In terms of assembly, homotetramer. May interact with ABCA1; functionally associated with ABCA1 in the biogenesis of HDLs. May interact with APP/A4 amyloid-beta peptide; the interaction is extremely stable in vitro but its physiological significance is unclear. May interact with MAPT. May interact with MAP2. In the cerebrospinal fluid, interacts with secreted SORL1. Interacts with PMEL; this allows the loading of PMEL luminal fragment on ILVs to induce fibril nucleation. Post-translationally, APOE exists as multiple glycosylated and sialylated glycoforms within cells and in plasma. The extent of glycosylation and sialylation are tissue and context specific. In terms of processing, glycated in plasma VLDL. Phosphorylated by FAM20C in the extracellular medium.

It is found in the secreted. Its subcellular location is the extracellular space. It localises to the extracellular matrix. The protein resides in the extracellular vesicle. The protein localises to the endosome. It is found in the multivesicular body. Functionally, APOE is an apolipoprotein, a protein associating with lipid particles, that mainly functions in lipoprotein-mediated lipid transport between organs via the plasma and interstitial fluids. APOE is a core component of plasma lipoproteins and is involved in their production, conversion and clearance. Apolipoproteins are amphipathic molecules that interact both with lipids of the lipoprotein particle core and the aqueous environment of the plasma. As such, APOE associates with chylomicrons, chylomicron remnants, very low density lipoproteins (VLDL) and intermediate density lipoproteins (IDL) but shows a preferential binding to high-density lipoproteins (HDL). It also binds a wide range of cellular receptors including the LDL receptor/LDLR, the LDL receptor-related proteins LRP1, LRP2 and LRP8 and the very low-density lipoprotein receptor/VLDLR that mediate the cellular uptake of the APOE-containing lipoprotein particles. Finally, APOE also has a heparin-binding activity and binds heparan-sulfate proteoglycans on the surface of cells, a property that supports the capture and the receptor-mediated uptake of APOE-containing lipoproteins by cells. A main function of APOE is to mediate lipoprotein clearance through the uptake of chylomicrons, VLDLs, and HDLs by hepatocytes. APOE is also involved in the biosynthesis by the liver of VLDLs as well as their uptake by peripheral tissues ensuring the delivery of triglycerides and energy storage in muscle, heart and adipose tissues. By participating in the lipoprotein-mediated distribution of lipids among tissues, APOE plays a critical role in plasma and tissues lipid homeostasis. APOE is also involved in two steps of reverse cholesterol transport, the HDLs-mediated transport of cholesterol from peripheral tissues to the liver, and thereby plays an important role in cholesterol homeostasis. First, it is functionally associated with ABCA1 in the biogenesis of HDLs in tissues. Second, it is enriched in circulating HDLs and mediates their uptake by hepatocytes. APOE also plays an important role in lipid transport in the central nervous system, regulating neuron survival and sprouting. This Macaca nemestrina (Pig-tailed macaque) protein is Apolipoprotein E (APOE).